A 226-amino-acid chain; its full sequence is ATP-dependent dethiobiotin synthetase BioD (226 aa).

Residue 12–17 coordinates ATP; sequence GIGKTV. Residue threonine 16 participates in Mg(2+) binding. Lysine 37 is an active-site residue. Threonine 41 contributes to the substrate binding site. ATP-binding positions include aspartate 49, 108–111, and 197–199; these read EGAG and PAG. Mg(2+) contacts are provided by aspartate 49 and glutamate 108.

It belongs to the dethiobiotin synthetase family. As to quaternary structure, homodimer. Mg(2+) serves as cofactor.

The protein resides in the cytoplasm. The enzyme catalyses (7R,8S)-7,8-diammoniononanoate + CO2 + ATP = (4R,5S)-dethiobiotin + ADP + phosphate + 3 H(+). The protein operates within cofactor biosynthesis; biotin biosynthesis; biotin from 7,8-diaminononanoate: step 1/2. Functionally, catalyzes a mechanistically unusual reaction, the ATP-dependent insertion of CO2 between the N7 and N8 nitrogen atoms of 7,8-diaminopelargonic acid (DAPA, also called 7,8-diammoniononanoate) to form a ureido ring. The sequence is that of ATP-dependent dethiobiotin synthetase BioD from Mycolicibacterium vanbaalenii (strain DSM 7251 / JCM 13017 / BCRC 16820 / KCTC 9966 / NRRL B-24157 / PYR-1) (Mycobacterium vanbaalenii).